A 264-amino-acid polypeptide reads, in one-letter code: Glutamate racemase (264 aa).

Substrate is bound by residues 10–11 and 42–43; these read DS and YG. Cysteine 73 functions as the Proton donor/acceptor in the catalytic mechanism. 74-75 is a substrate binding site; the sequence is NT. Cysteine 183 functions as the Proton donor/acceptor in the catalytic mechanism. 184 to 185 lines the substrate pocket; sequence TH.

The protein belongs to the aspartate/glutamate racemases family.

It catalyses the reaction L-glutamate = D-glutamate. It participates in cell wall biogenesis; peptidoglycan biosynthesis. Functionally, provides the (R)-glutamate required for cell wall biosynthesis. This Streptococcus gordonii (strain Challis / ATCC 35105 / BCRC 15272 / CH1 / DL1 / V288) protein is Glutamate racemase.